The following is a 108-amino-acid chain: Structural protein 1 (108 aa).

Residues 1–77 (MSRVSEYGVP…LKMQMDRLCN (77 aa)) are Intravirion-facing. Residues 78 to 98 (VLGVVLQMATLALVTYIAFVV) traverse the membrane as a helical; Signal-anchor for type II membrane protein segment. Residues 99-108 (HTRATSCKRE) are Virion surface-facing.

This sequence belongs to the varicellovirus ORF1 protein family. As to quaternary structure, homodimer. In terms of processing, phosphorylated.

It localises to the virion membrane. Its subcellular location is the host Golgi apparatus membrane. The chain is Structural protein 1 from Homo sapiens (Human).